A 65-amino-acid polypeptide reads, in one-letter code: Alpha-conotoxin BnIA (65 aa).

The first 21 residues, M1–S21, serve as a signal peptide directing secretion. Residues F22–K48 constitute a propeptide that is removed on maturation. Cystine bridges form between C50/C56 and C51/C64. Positions S52–P54 are ser-Xaa-Pro motif, crucial for potent interaction with nAChR. The residue at position 64 (C64) is a Cysteine amide.

It belongs to the conotoxin A superfamily. In terms of tissue distribution, expressed by the venom duct.

The protein localises to the secreted. In terms of biological role, alpha-conotoxins act on postsynaptic membranes, they bind to the nicotinic acetylcholine receptors (nAChR) and thus inhibit them. This toxin inhibits acetylcholine-evoked currents reversibly in oocytes expressing the human alpha-7/CHRNA7 nAChR, and blocks nerve-evoked skeletal muscle contractions in isolated mouse neuromuscular preparations, but with a very low affinity. The sequence is that of Alpha-conotoxin BnIA from Conus bandanus (Banded marble cone).